Reading from the N-terminus, the 503-residue chain is Glutamate--tRNA ligase (503 aa).

Positions 12–22 (PSPTGYLHVGG) match the 'HIGH' region motif. A 'KMSKS' region motif is present at residues 259–263 (KLSKR). ATP is bound at residue Lys-262.

The protein belongs to the class-I aminoacyl-tRNA synthetase family. Glutamate--tRNA ligase type 1 subfamily. As to quaternary structure, monomer.

Its subcellular location is the cytoplasm. It carries out the reaction tRNA(Glu) + L-glutamate + ATP = L-glutamyl-tRNA(Glu) + AMP + diphosphate. Functionally, catalyzes the attachment of glutamate to tRNA(Glu) in a two-step reaction: glutamate is first activated by ATP to form Glu-AMP and then transferred to the acceptor end of tRNA(Glu). The polypeptide is Glutamate--tRNA ligase (Chlorobaculum parvum (strain DSM 263 / NCIMB 8327) (Chlorobium vibrioforme subsp. thiosulfatophilum)).